Reading from the N-terminus, the 152-residue chain is Ribosome maturation factor RimP (152 aa).

Belongs to the RimP family.

Its subcellular location is the cytoplasm. In terms of biological role, required for maturation of 30S ribosomal subunits. The polypeptide is Ribosome maturation factor RimP (Alkaliphilus metalliredigens (strain QYMF)).